The sequence spans 547 residues: ATP synthase subunit alpha (547 aa).

172–179 (GDRKTGKT) provides a ligand contact to ATP.

It belongs to the ATPase alpha/beta chains family. In terms of assembly, F-type ATPases have 2 components, CF(1) - the catalytic core - and CF(0) - the membrane proton channel. CF(1) has five subunits: alpha(3), beta(3), gamma(1), delta(1), epsilon(1). CF(0) has three main subunits: a(1), b(2) and c(9-12). The alpha and beta chains form an alternating ring which encloses part of the gamma chain. CF(1) is attached to CF(0) by a central stalk formed by the gamma and epsilon chains, while a peripheral stalk is formed by the delta and b chains.

Its subcellular location is the cell membrane. The catalysed reaction is ATP + H2O + 4 H(+)(in) = ADP + phosphate + 5 H(+)(out). Produces ATP from ADP in the presence of a proton gradient across the membrane. The alpha chain is a regulatory subunit. This Rhodococcus opacus (strain B4) protein is ATP synthase subunit alpha.